Reading from the N-terminus, the 73-residue chain is Putative sodium channel toxin Ts39 (73 aa).

The signal sequence occupies residues 1–22; sequence MKTLNFCLFLVIISSLTVRVFC. An LCN-type CS-alpha/beta domain is found at 24–73; it reads NDRFLTVNDNYVICLYINKSFVNCENLCKAYMNAKDGFCRQPHCFCTDVE. Intrachain disulfides connect Cys-37–Cys-62, Cys-47–Cys-67, and Cys-51–Cys-69.

The protein belongs to the long (3 C-C) scorpion toxin superfamily. Sodium channel inhibitor family. Expressed by the venom gland.

The protein localises to the secreted. In terms of biological role, putative sodium channel toxin. This chain is Putative sodium channel toxin Ts39, found in Tityus serrulatus (Brazilian scorpion).